The chain runs to 349 residues: Zinc-type alcohol dehydrogenase-like protein PB24D3.08c (349 aa).

Belongs to the zinc-containing alcohol dehydrogenase family. Quinone oxidoreductase subfamily.

The protein resides in the cytoplasm. Its subcellular location is the nucleus. The chain is Zinc-type alcohol dehydrogenase-like protein PB24D3.08c from Schizosaccharomyces pombe (strain 972 / ATCC 24843) (Fission yeast).